The chain runs to 233 residues: UPF0502 protein Mpe_A1449 (233 aa).

Belongs to the UPF0502 family.

This chain is UPF0502 protein Mpe_A1449, found in Methylibium petroleiphilum (strain ATCC BAA-1232 / LMG 22953 / PM1).